Here is a 343-residue protein sequence, read N- to C-terminus: Arginine-hydroxylase NDUFAF5, mitochondrial (343 aa).

A mitochondrion-targeting transit peptide spans Met-1 to Val-29.

The protein belongs to the methyltransferase superfamily. As to quaternary structure, interacts with NDUFAF8, leading to stabilize NDUFAF5. Interacts with NDUFS7. Interacts with PYURF (via TRM112 domain); the interaction is direct and stabilizes NDUFAF5 protein.

It localises to the mitochondrion inner membrane. Its function is as follows. Arginine hydroxylase that mediates hydroxylation of 'Arg-122' of NDUFS7 and is involved in the assembly of mitochondrial NADH:ubiquinone oxidoreductase complex (complex I, MT-ND1) at early stages. May also have methyltransferase activity. The chain is Arginine-hydroxylase NDUFAF5, mitochondrial from Mus musculus (Mouse).